A 189-amino-acid polypeptide reads, in one-letter code: Glucose-6-phosphate isomerase (189 aa).

Fe cation-binding residues include histidine 88, histidine 90, glutamate 97, and histidine 136.

Belongs to the archaeal-type GPI family. Homodimer. Fe cation is required as a cofactor.

It localises to the cytoplasm. It catalyses the reaction alpha-D-glucose 6-phosphate = beta-D-fructose 6-phosphate. Its pathway is carbohydrate degradation; glycolysis; D-glyceraldehyde 3-phosphate and glycerone phosphate from D-glucose: step 2/4. This is Glucose-6-phosphate isomerase (pgiA) from Pyrococcus horikoshii (strain ATCC 700860 / DSM 12428 / JCM 9974 / NBRC 100139 / OT-3).